Reading from the N-terminus, the 157-residue chain is Putative pre-16S rRNA nuclease (157 aa).

The protein belongs to the YqgF nuclease family.

The protein localises to the cytoplasm. In terms of biological role, could be a nuclease involved in processing of the 5'-end of pre-16S rRNA. This Ruegeria sp. (strain TM1040) (Silicibacter sp.) protein is Putative pre-16S rRNA nuclease.